We begin with the raw amino-acid sequence, 282 residues long: Elongation factor Ts (282 aa).

The interval Thr-79–Val-82 is involved in Mg(2+) ion dislocation from EF-Tu.

The protein belongs to the EF-Ts family.

Its subcellular location is the cytoplasm. Its function is as follows. Associates with the EF-Tu.GDP complex and induces the exchange of GDP to GTP. It remains bound to the aminoacyl-tRNA.EF-Tu.GTP complex up to the GTP hydrolysis stage on the ribosome. The protein is Elongation factor Ts of Shewanella piezotolerans (strain WP3 / JCM 13877).